Here is a 78-residue protein sequence, read N- to C-terminus: MSRVCQLTGKKANNAYAISHSHRRTKRLQNVNLQEKRIWWPEGNRFVKLRLSTKAIKTLQKKGLSAYARELGIDLKRL.

The protein belongs to the bacterial ribosomal protein bL28 family.

This Synechococcus sp. (strain ATCC 27144 / PCC 6301 / SAUG 1402/1) (Anacystis nidulans) protein is Large ribosomal subunit protein bL28.